We begin with the raw amino-acid sequence, 313 residues long: Pyrimidine-specific ribonucleoside hydrolase RihA (313 aa).

The active site involves histidine 240.

It belongs to the IUNH family. RihA subfamily.

In terms of biological role, hydrolyzes cytidine or uridine to ribose and cytosine or uracil, respectively. The protein is Pyrimidine-specific ribonucleoside hydrolase RihA of Enterobacter sp. (strain 638).